The sequence spans 615 residues: UvrABC system protein C (615 aa).

A GIY-YIG domain is found at 14–91 (TSPGCYIHKD…IKENKPKYNI (78 aa)). In terms of domain architecture, UVR spans 196–231 (NKIIDELKGKMAAAAQTMEFERAAEYRDLIQAIGTL).

This sequence belongs to the UvrC family. In terms of assembly, interacts with UvrB in an incision complex.

It localises to the cytoplasm. Functionally, the UvrABC repair system catalyzes the recognition and processing of DNA lesions. UvrC both incises the 5' and 3' sides of the lesion. The N-terminal half is responsible for the 3' incision and the C-terminal half is responsible for the 5' incision. This chain is UvrABC system protein C, found in Streptococcus pneumoniae (strain JJA).